Here is a 539-residue protein sequence, read N- to C-terminus: 4-hydroxybenzoate--CoA/benzoate--CoA ligase (539 aa).

It belongs to the ATP-dependent AMP-binding enzyme family. Benzoate-CoA ligase subfamily. Homodimer. The N-terminus is blocked.

It carries out the reaction 4-hydroxybenzoate + ATP + CoA = 4-hydroxybenzoyl-CoA + AMP + diphosphate. The enzyme catalyses benzoate + ATP + CoA = benzoyl-CoA + AMP + diphosphate. Its function is as follows. Catalyzes the ligation of 4-hydroxybenzoate, benzoate or cyclohex-1,4-dienecarboxylate and CoA at the expense of ATP. The enzyme shows low activity towards cyclo-2,5-dienecarboxylate, 4-fluorobenzoate, 4-chlorobenzoate and 2-methoxybenzoate. This chain is 4-hydroxybenzoate--CoA/benzoate--CoA ligase (hbaA), found in Rhodopseudomonas palustris (strain ATCC BAA-98 / CGA009).